The sequence spans 217 residues: Phosphatase MT3486 (217 aa).

Catalysis depends on Asp-9, which acts as the Nucleophile.

It belongs to the HAD-like hydrolase superfamily.

Functionally, able to hydrolyze geranyl diphosphate (GPP), farnesyl diphosphate (FPP) and geranylgeranyl diphosphate (GGPP) to respectively yield geraniol, farnesol and geranylgeraniol. This Mycobacterium tuberculosis (strain CDC 1551 / Oshkosh) protein is Phosphatase MT3486.